The primary structure comprises 417 residues: Serpin H1 (417 aa).

The signal sequence occupies residues 1–18 (MRSLLLLSAFCLLEAALA). Residue K94 is modified to N6-succinyllysine. 2 N-linked (GlcNAc...) asparagine glycosylation sites follow: N120 and N125. Residue S141 is modified to Phosphoserine. K206 bears the N6-acetyllysine mark. K295 bears the N6-succinyllysine mark. Residue K318 is modified to N6-acetyllysine. The Prevents secretion from ER signature appears at 414–417 (RDEL).

It belongs to the serpin family.

The protein resides in the endoplasmic reticulum lumen. Functionally, binds specifically to collagen. Could be involved as a chaperone in the biosynthetic pathway of collagen. This is Serpin H1 (SERPINH1) from Pongo abelii (Sumatran orangutan).